A 211-amino-acid polypeptide reads, in one-letter code: Ribosomal RNA small subunit methyltransferase G (211 aa).

S-adenosyl-L-methionine contacts are provided by residues Gly74, Leu79, 125-126, and Arg140; that span reads AE.

The protein belongs to the methyltransferase superfamily. RNA methyltransferase RsmG family.

It is found in the cytoplasm. In terms of biological role, specifically methylates the N7 position of guanine in position 518 of 16S rRNA. In Clavibacter michiganensis subsp. michiganensis (strain NCPPB 382), this protein is Ribosomal RNA small subunit methyltransferase G.